The following is a 62-amino-acid chain: Cecropin-A (62 aa).

An N-terminal signal peptide occupies residues 1–20 (MNLVKILFCVFACLVFTVTA). Residues 21-24 (VPEP) constitute a propeptide, removed by a dipeptidylpeptidase. Residue T60 is modified to Threonine amide.

This sequence belongs to the cecropin family.

It is found in the secreted. Has antibacterial activity. The protein is Cecropin-A of Trichoplusia ni (Cabbage looper).